A 129-amino-acid chain; its full sequence is Small ribosomal subunit protein uS11 (129 aa).

Belongs to the universal ribosomal protein uS11 family. In terms of assembly, part of the 30S ribosomal subunit. Interacts with proteins S7 and S18. Binds to IF-3.

Functionally, located on the platform of the 30S subunit, it bridges several disparate RNA helices of the 16S rRNA. Forms part of the Shine-Dalgarno cleft in the 70S ribosome. This chain is Small ribosomal subunit protein uS11, found in Mesorhizobium japonicum (strain LMG 29417 / CECT 9101 / MAFF 303099) (Mesorhizobium loti (strain MAFF 303099)).